The sequence spans 304 residues: Acetaldehyde dehydrogenase 1 (304 aa).

11-14 (SGNI) contacts NAD(+). Catalysis depends on cysteine 130, which acts as the Acyl-thioester intermediate. NAD(+) contacts are provided by residues 161–169 (SVGPGTRAN) and asparagine 272.

This sequence belongs to the acetaldehyde dehydrogenase family.

The catalysed reaction is acetaldehyde + NAD(+) + CoA = acetyl-CoA + NADH + H(+). The chain is Acetaldehyde dehydrogenase 1 (lapF) from Azoarcus sp. (strain BH72).